The following is a 676-amino-acid chain: Lutropin-choriogonadotropic hormone receptor (676 aa).

The first 29 residues, 1 to 29, serve as a signal peptide directing secretion; that stretch reads MKQPLLALQLLKLLLLLLLPLPPLPRALR. Topologically, residues 30-340 are extracellular; it reads EARCCPEPCN…EDIMGYDFLR (311 aa). An N-linked (GlcNAc...) asparagine glycan is attached at Asn103. LRR repeat units lie at residues 126–151, 153–175, 176–200, 201–224, and 225–248; these read LPRL…IFSS, TNFI…AFQG, MNNE…AFNG, TTVI…AFRG, and ATGP…GLES. N-linked (GlcNAc...) asparagine glycans are attached at residues Asn178 and Asn199. Tyr308 carries the sulfotyrosine modification. The helical transmembrane segment at 341–362 threads the bilayer; it reads VLIWLINILAIMGNMTVLFVLL. Topologically, residues 363–372 are cytoplasmic; the sequence is TSRYKLTVPR. A helical membrane pass occupies residues 373–393; the sequence is FLMCNLSFADFCMGLYLLLIA. Residues 394 to 416 are Extracellular-facing; the sequence is SVDSQTKGQYYNHAIDWQTGSGC. Residues Cys416 and Cys491 are joined by a disulfide bond. A helical transmembrane segment spans residues 417 to 439; it reads NTAGFFTVFASELSVYTLTVITL. The Cytoplasmic segment spans residues 440 to 459; it reads ERWHTITYAIHLDQKLRLRH. The helical transmembrane segment at 460-482 threads the bilayer; that stretch reads AILIMLGGWLFSSLIAMLPLVGV. The Extracellular portion of the chain corresponds to 483–502; it reads SNYMKVSICFPMDVETTLSQ. A helical membrane pass occupies residues 503 to 526; that stretch reads IYILTILILNVVAFIIICACYIKI. Topologically, residues 527 to 547 are cytoplasmic; it reads YFAVRNPELMATNKDTKIAKK. A helical membrane pass occupies residues 548–571; sequence MAILIFTDFTCMAPISFFAISAAF. Topologically, residues 572 to 582 are extracellular; the sequence is KMPLITVTNSK. Residues 583–604 traverse the membrane as a helical segment; sequence VLLVLFYPINSCANPFLYAIFT. The Cytoplasmic segment spans residues 605-676; it reads KTFRRDFFLL…LLDKTCYKEY (72 aa). S-palmitoyl cysteine attachment occurs at residues Cys620 and Cys621.

It belongs to the G-protein coupled receptor 1 family. FSH/LSH/TSH subfamily. Post-translationally, sulfated.

It is found in the cell membrane. Receptor for lutropin-choriogonadotropic hormone. The activity of this receptor is mediated by G proteins which activate adenylate cyclase. In Callithrix jacchus (White-tufted-ear marmoset), this protein is Lutropin-choriogonadotropic hormone receptor (LHCGR).